Consider the following 290-residue polypeptide: Fat storage-inducing transmembrane protein 1 (290 aa).

5 helical membrane passes run 1-21 (MFLN…LGNT), 26-46 (HFHL…LWVS), 65-85 (SGWG…SFSV), 173-193 (LLLC…GPYL), and 205-225 (ILFL…LCLL).

Belongs to the FIT family. FIT1 subfamily.

The protein localises to the endoplasmic reticulum membrane. Its function is as follows. May play an important role in the formation of lipid droplets (LDs) which are storage organelles at the center of lipid and energy homeostasis. May directly bind to diacylglycerol (DAGs) and triacylglycerol. The sequence is that of Fat storage-inducing transmembrane protein 1 (fitm1l) from Danio rerio (Zebrafish).